Reading from the N-terminus, the 62-residue chain is Synergistic-type venom protein C8S2, chain 1 (62 aa).

3 disulfide bridges follow: Cys-3–Cys-24, Cys-17–Cys-42, and Cys-46–Cys-57.

Belongs to the three-finger toxin family. Short-chain subfamily. Aminergic toxin sub-subfamily. Heterodimer of C8S2 chain 1 and chain 2 (AC P01411); disulfide-linked. As to expression, expressed by the venom gland.

The protein localises to the secreted. Its function is as follows. This protein shows a synergetic toxic effect in that it enhances the toxicity of other toxins. The chain is Synergistic-type venom protein C8S2, chain 1 from Dendroaspis angusticeps (Eastern green mamba).